Reading from the N-terminus, the 789-residue chain is Glycerol-3-phosphate acyltransferase (789 aa).

An HXXXXD motif motif is present at residues 276–281 (HRSYID).

This sequence belongs to the GPAT/DAPAT family.

The protein resides in the cell membrane. The enzyme catalyses sn-glycerol 3-phosphate + an acyl-CoA = a 1-acyl-sn-glycero-3-phosphate + CoA. The protein operates within phospholipid metabolism; CDP-diacylglycerol biosynthesis; CDP-diacylglycerol from sn-glycerol 3-phosphate: step 1/3. This Mycobacterium bovis (strain ATCC BAA-935 / AF2122/97) protein is Glycerol-3-phosphate acyltransferase.